The chain runs to 282 residues: Putative phosphoenolpyruvate synthase regulatory protein (282 aa).

161-168 (GVSRSGKT) lines the ADP pocket.

Belongs to the pyruvate, phosphate/water dikinase regulatory protein family. PSRP subfamily.

The enzyme catalyses [pyruvate, water dikinase] + ADP = [pyruvate, water dikinase]-phosphate + AMP + H(+). It carries out the reaction [pyruvate, water dikinase]-phosphate + phosphate + H(+) = [pyruvate, water dikinase] + diphosphate. In terms of biological role, bifunctional serine/threonine kinase and phosphorylase involved in the regulation of the phosphoenolpyruvate synthase (PEPS) by catalyzing its phosphorylation/dephosphorylation. The chain is Putative phosphoenolpyruvate synthase regulatory protein from Janthinobacterium sp. (strain Marseille) (Minibacterium massiliensis).